The following is a 396-amino-acid chain: Acetate kinase (396 aa).

Position 7 (Asn7) interacts with Mg(2+). Lys14 lines the ATP pocket. Arg88 lines the substrate pocket. Asp145 (proton donor/acceptor) is an active-site residue. ATP is bound by residues 203–207 (HAGNG), 278–280 (DAR), and 326–330 (GIGEN). Glu379 contacts Mg(2+).

The protein belongs to the acetokinase family. As to quaternary structure, homodimer. Requires Mg(2+) as cofactor. Mn(2+) is required as a cofactor.

It localises to the cytoplasm. It catalyses the reaction acetate + ATP = acetyl phosphate + ADP. It participates in metabolic intermediate biosynthesis; acetyl-CoA biosynthesis; acetyl-CoA from acetate: step 1/2. Its function is as follows. Catalyzes the formation of acetyl phosphate from acetate and ATP. Can also catalyze the reverse reaction. This Phytoplasma australiense protein is Acetate kinase.